The following is a 990-amino-acid chain: DNA ligase 4 (990 aa).

The interval 57–84 (TQKKGRQPPGPRRKAGPHGHSNLSPHEA) is disordered. ATP is bound by residues E324, K326, L327, R331, E394, F436, E496, K501, K518, and K520. K326 serves as the catalytic N6-AMP-lysine intermediate. E394 is a binding site for Mg(2+). Residue E496 coordinates Mg(2+). BRCT domains lie at 728–821 (PQSK…LPYL) and 900–989 (YMFS…RYQW).

It belongs to the ATP-dependent DNA ligase family. Requires Mg(2+) as cofactor.

The protein localises to the nucleus. It carries out the reaction ATP + (deoxyribonucleotide)n-3'-hydroxyl + 5'-phospho-(deoxyribonucleotide)m = (deoxyribonucleotide)n+m + AMP + diphosphate.. Functionally, DNA ligase involved in DNA non-homologous end joining (NHEJ); required for double-strand break (DSB) repair. The chain is DNA ligase 4 (LIG4) from Phaeosphaeria nodorum (strain SN15 / ATCC MYA-4574 / FGSC 10173) (Glume blotch fungus).